The primary structure comprises 123 residues: Thioredoxin H-type 1 (123 aa).

Ala2 is modified (N-acetylalanine). In terms of domain architecture, Thioredoxin spans 2 to 119 (AATAEVIPAG…IEAKLLKHSQ (118 aa)). Cysteines 45 and 48 form a disulfide.

This sequence belongs to the thioredoxin family. Plant H-type subfamily.

The protein localises to the cytoplasm. Its function is as follows. Participates in various redox reactions through the reversible oxidation of the active center dithiol to a disulfide. The H form is known to activate a number of cytosolic enzymes. The polypeptide is Thioredoxin H-type 1 (THL-1) (Brassica napus (Rape)).